We begin with the raw amino-acid sequence, 177 residues long: ATP synthase subunit delta (177 aa).

This sequence belongs to the ATPase delta chain family. F-type ATPases have 2 components, F(1) - the catalytic core - and F(0) - the membrane proton channel. F(1) has five subunits: alpha(3), beta(3), gamma(1), delta(1), epsilon(1). F(0) has three main subunits: a(1), b(2) and c(10-14). The alpha and beta chains form an alternating ring which encloses part of the gamma chain. F(1) is attached to F(0) by a central stalk formed by the gamma and epsilon chains, while a peripheral stalk is formed by the delta and b chains.

It localises to the cell inner membrane. F(1)F(0) ATP synthase produces ATP from ADP in the presence of a proton or sodium gradient. F-type ATPases consist of two structural domains, F(1) containing the extramembraneous catalytic core and F(0) containing the membrane proton channel, linked together by a central stalk and a peripheral stalk. During catalysis, ATP synthesis in the catalytic domain of F(1) is coupled via a rotary mechanism of the central stalk subunits to proton translocation. In terms of biological role, this protein is part of the stalk that links CF(0) to CF(1). It either transmits conformational changes from CF(0) to CF(1) or is implicated in proton conduction. The chain is ATP synthase subunit delta from Shewanella piezotolerans (strain WP3 / JCM 13877).